Consider the following 469-residue polypeptide: Argininosuccinate lyase (469 aa).

Belongs to the lyase 1 family. Argininosuccinate lyase subfamily.

Its subcellular location is the cytoplasm. The catalysed reaction is 2-(N(omega)-L-arginino)succinate = fumarate + L-arginine. Its pathway is amino-acid biosynthesis; L-arginine biosynthesis; L-arginine from L-ornithine and carbamoyl phosphate: step 3/3. The sequence is that of Argininosuccinate lyase from Burkholderia mallei (strain NCTC 10247).